The chain runs to 337 residues: tRNA dimethylallyltransferase (337 aa).

Position 24-31 (24-31 (GPTGAGKT)) interacts with ATP. Residue 26–31 (TGAGKT) participates in substrate binding. Interaction with substrate tRNA regions lie at residues 49-52 (DSRQ) and 188-192 (QRAVR).

Belongs to the IPP transferase family. As to quaternary structure, monomer. Mg(2+) serves as cofactor.

It catalyses the reaction adenosine(37) in tRNA + dimethylallyl diphosphate = N(6)-dimethylallyladenosine(37) in tRNA + diphosphate. In terms of biological role, catalyzes the transfer of a dimethylallyl group onto the adenine at position 37 in tRNAs that read codons beginning with uridine, leading to the formation of N6-(dimethylallyl)adenosine (i(6)A). This Nitratidesulfovibrio vulgaris (strain DSM 19637 / Miyazaki F) (Desulfovibrio vulgaris) protein is tRNA dimethylallyltransferase.